The chain runs to 426 residues: Serine--tRNA ligase (426 aa).

Thr233 to Glu235 is a binding site for L-serine. Residue Arg264 to Glu266 participates in ATP binding. Residue Glu287 participates in L-serine binding. ATP is bound at residue Glu351 to Ser354. Residue Ser387 coordinates L-serine.

The protein belongs to the class-II aminoacyl-tRNA synthetase family. Type-1 seryl-tRNA synthetase subfamily. In terms of assembly, homodimer. The tRNA molecule binds across the dimer.

The protein resides in the cytoplasm. The catalysed reaction is tRNA(Ser) + L-serine + ATP = L-seryl-tRNA(Ser) + AMP + diphosphate + H(+). It carries out the reaction tRNA(Sec) + L-serine + ATP = L-seryl-tRNA(Sec) + AMP + diphosphate + H(+). It participates in aminoacyl-tRNA biosynthesis; selenocysteinyl-tRNA(Sec) biosynthesis; L-seryl-tRNA(Sec) from L-serine and tRNA(Sec): step 1/1. Catalyzes the attachment of serine to tRNA(Ser). Is also able to aminoacylate tRNA(Sec) with serine, to form the misacylated tRNA L-seryl-tRNA(Sec), which will be further converted into selenocysteinyl-tRNA(Sec). The polypeptide is Serine--tRNA ligase (Pseudomonas putida (strain W619)).